Reading from the N-terminus, the 443-residue chain is Cobyrinate a,c-diamide synthase (443 aa).

A GATase cobBQ-type domain is found at 248 to 433; the sequence is KIAVAYDKAF…LHNHAVANPY (186 aa). Cysteine 327 serves as the catalytic Nucleophile.

This sequence belongs to the CobB/CbiA family. Mg(2+) serves as cofactor.

The catalysed reaction is cob(II)yrinate + 2 L-glutamine + 2 ATP + 2 H2O = cob(II)yrinate a,c diamide + 2 L-glutamate + 2 ADP + 2 phosphate + 2 H(+). The enzyme catalyses Ni-sirohydrochlorin + 2 L-glutamine + 2 ATP + 2 H2O = Ni-sirohydrochlorin a,c-diamide + 2 L-glutamate + 2 ADP + 2 phosphate + 2 H(+). The protein operates within cofactor biosynthesis; adenosylcobalamin biosynthesis; cob(II)yrinate a,c-diamide from sirohydrochlorin (anaerobic route): step 10/10. Catalyzes the ATP-dependent amidation of the two carboxylate groups at positions a and c of cobyrinate, using either L-glutamine or ammonia as the nitrogen source. Involved in the biosynthesis of the unique nickel-containing tetrapyrrole coenzyme F430, the prosthetic group of methyl-coenzyme M reductase (MCR), which plays a key role in methanogenesis and anaerobic methane oxidation. Catalyzes the ATP-dependent amidation of the two carboxylate groups at positions a and c of Ni-sirohydrochlorin, using L-glutamine or ammonia as the nitrogen source. In Methanocaldococcus jannaschii (strain ATCC 43067 / DSM 2661 / JAL-1 / JCM 10045 / NBRC 100440) (Methanococcus jannaschii), this protein is Cobyrinate a,c-diamide synthase.